Consider the following 491-residue polypeptide: Probable cytosol aminopeptidase (491 aa).

Mn(2+) is bound by residues lysine 264 and aspartate 269. Residue lysine 276 is part of the active site. Aspartate 287, aspartate 346, and glutamate 348 together coordinate Mn(2+). The active site involves arginine 350.

This sequence belongs to the peptidase M17 family. Mn(2+) is required as a cofactor.

The protein localises to the cytoplasm. The catalysed reaction is Release of an N-terminal amino acid, Xaa-|-Yaa-, in which Xaa is preferably Leu, but may be other amino acids including Pro although not Arg or Lys, and Yaa may be Pro. Amino acid amides and methyl esters are also readily hydrolyzed, but rates on arylamides are exceedingly low.. The enzyme catalyses Release of an N-terminal amino acid, preferentially leucine, but not glutamic or aspartic acids.. Its function is as follows. Presumably involved in the processing and regular turnover of intracellular proteins. Catalyzes the removal of unsubstituted N-terminal amino acids from various peptides. This chain is Probable cytosol aminopeptidase, found in Xylella fastidiosa (strain M12).